The primary structure comprises 312 residues: Phospholipid phosphatase 3 (312 aa).

At 1–33 the chain is on the cytoplasmic side; sequence MQSYKYDKAIVPESKNGGSPALNNNPRKGGSKR. Phosphoserine is present on Ser-19. The helical transmembrane segment at 34–54 threads the bilayer; the sequence is VLLICLDLFCLFMAALPFLII. Topologically, residues 55 to 85 are extracellular; that stretch reads ETSTIKPYRRGFYCNDESIKYPLKVSETIND. A helical membrane pass occupies residues 86–106; sequence AVLCAVGIVIAILAIITGEFY. The Cytoplasmic segment spans residues 107–123; sequence RIYYLKEKSRSTTQNPY. Residues 109-110 carry the Dityrosine basolateral targeting motif motif; sequence YY. The helical transmembrane segment at 124-144 threads the bilayer; sequence VAALYKQVGCFLFGCAISQSF. The Extracellular segment spans residues 145–194; the sequence is TDIAKVSIGRLRPHFLSVCDPDFSQINCSEGYIQNYRCRGEDSKVQEARK. Residues 149–157 form a phosphatase sequence motif I region; that stretch reads KVSIGRLRP. The N-linked (GlcNAc...) asparagine glycan is linked to Asn-171. The short motif at 183-185 is the Integrin-binding motif element; sequence RGE. A helical transmembrane segment spans residues 195–215; the sequence is SFFSGHASFSMFTMLYLVLYL. Residues 197–200 are phosphatase sequence motif II; sequence FSGH. The Proton donors role is filled by His-200. Residues 216–226 are Cytoplasmic-facing; that stretch reads QARFTWRGARL. Residues 227-244 traverse the membrane as a helical segment; the sequence is LRPLLQFTLLMMAFYTGL. The tract at residues 245–256 is phosphatase sequence motif III; sequence SRVSDYKHHPSD. Topologically, residues 245–258 are extracellular; it reads SRVSDYKHHPSDVL. Catalysis depends on His-252, which acts as the Nucleophile. Residues 259-279 traverse the membrane as a helical segment; that stretch reads AGFAQGALVACCIVFFVSDLF. Residues 276–312 form a mediates interaction with CTNND1 region; sequence SDLFKTKTSLSLPAPAIRREILSPVDIIDRNNHHNMV. The Cytoplasmic segment spans residues 280–312; sequence KTKTSLSLPAPAIRREILSPVDIIDRNNHHNMV.

The protein belongs to the PA-phosphatase related phosphoesterase family. In terms of assembly, forms functional homodimers and homooligomers that are not required for substrate recognition and catalytic activity. Can also form heterooligomers with other PLPP2 and PLPP3. Interacts with CTNND1; negatively regulates the PLPP3-mediated stabilization of beta-catenin/CTNNB1. In terms of processing, N-glycosylated. Contains high-mannose oligosaccharides. As to expression, detected in lung, cerebellum and heart atrium.

It localises to the cell membrane. The protein localises to the basolateral cell membrane. It is found in the endoplasmic reticulum membrane. The protein resides in the endoplasmic reticulum-Golgi intermediate compartment membrane. Its subcellular location is the golgi apparatus membrane. It localises to the golgi apparatus. The protein localises to the trans-Golgi network membrane. It is found in the membrane raft. The catalysed reaction is a 1,2-diacyl-sn-glycero-3-phosphate + H2O = a 1,2-diacyl-sn-glycerol + phosphate. The enzyme catalyses 1,2-dihexadecanoyl-sn-glycero-3-phosphate + H2O = 1,2-dihexadecanoyl-sn-glycerol + phosphate. It catalyses the reaction 1,2-di-(9Z-octadecenoyl)-sn-glycero-3-phosphate + H2O = 1,2-di-(9Z-octadecenoyl)-sn-glycerol + phosphate. It carries out the reaction a monoacyl-sn-glycero-3-phosphate + H2O = a monoacylglycerol + phosphate. The catalysed reaction is (9Z)-octadecenoyl-sn-glycero-3-phosphate + H2O = (9Z-octadecenoyl)-glycerol + phosphate. The enzyme catalyses sphing-4-enine 1-phosphate + H2O = sphing-4-enine + phosphate. It catalyses the reaction an N-acylsphing-4-enine 1-phosphate + H2O = an N-acylsphing-4-enine + phosphate. It carries out the reaction N-(octanoyl)-sphing-4-enine-1-phosphate + H2O = N-octanoylsphing-4-enine + phosphate. The catalysed reaction is N-(9Z-octadecenoyl)-ethanolamine phosphate + H2O = N-(9Z-octadecenoyl) ethanolamine + phosphate. It participates in lipid metabolism; phospholipid metabolism. Its activity is regulated as follows. Magnesium-independent phospholipid phosphatase. Insensitive to N-ethylmaleimide. Its function is as follows. Magnesium-independent phospholipid phosphatase of the plasma membrane that catalyzes the dephosphorylation of a variety of glycerolipid and sphingolipid phosphate esters including phosphatidate/PA, lysophosphatidate/LPA, diacylglycerol pyrophosphate/DGPP, sphingosine 1-phosphate/S1P and ceramide 1-phosphate/C1P. Also acts on N-oleoyl ethanolamine phosphate/N-(9Z-octadecenoyl)-ethanolamine phosphate, a potential physiological compound. Has both an extracellular and an intracellular phosphatase activity, allowing the hydrolysis and the cellular uptake of these bioactive lipid mediators from the milieu, regulating signal transduction in different cellular processes. Through the dephosphorylation of extracellular sphingosine-1-phosphate and the regulation of its extra- and intracellular availability, plays a role in vascular homeostasis, regulating endothelial cell migration, adhesion, survival, proliferation and the production of pro-inflammatory cytokines. By maintaining the appropriate levels of this lipid in the cerebellum, also ensure its proper development and function. Through its intracellular lipid phosphatase activity may act in early compartments of the secretory pathway, regulating the formation of Golgi to endoplasmic reticulum retrograde transport carriers. In terms of biological role, independently of this phosphatase activity may also function in the Wnt signaling pathway and the stabilization of beta-catenin/CTNNB1, thereby regulating cell proliferation, migration and differentiation in angiogenesis or yet in tumor growth. Also plays a role in integrin-mediated cell-cell adhesion in angiogenesis. This Mus musculus (Mouse) protein is Phospholipid phosphatase 3.